The following is a 719-amino-acid chain: Eukaryotic translation initiation factor 3 subunit B (719 aa).

The 88-residue stretch at 60 to 147 (NILVVDNLPV…HIFAVNMFDD (88 aa)) folds into the RRM domain. 3 WD repeats span residues 167–207 (VPGE…KPEL), 511–553 (LKGK…TMAS), and 555–598 (EHFM…LYRI). Over residues 675 to 686 (EKMERQKLRDGE) the composition is skewed to basic and acidic residues. The disordered stretch occupies residues 675 to 698 (EKMERQKLRDGEASDEEEEYEAKE). A compositionally biased stretch (acidic residues) spans 687 to 698 (ASDEEEEYEAKE).

This sequence belongs to the eIF-3 subunit B family. As to quaternary structure, component of the eukaryotic translation initiation factor 3 (eIF-3) complex.

It localises to the cytoplasm. Its function is as follows. RNA-binding component of the eukaryotic translation initiation factor 3 (eIF-3) complex, which is involved in protein synthesis of a specialized repertoire of mRNAs and, together with other initiation factors, stimulates binding of mRNA and methionyl-tRNAi to the 40S ribosome. The eIF-3 complex specifically targets and initiates translation of a subset of mRNAs involved in cell proliferation. The sequence is that of Eukaryotic translation initiation factor 3 subunit B (TIF3B1) from Nicotiana tabacum (Common tobacco).